Here is a 264-residue protein sequence, read N- to C-terminus: Triosephosphate isomerase (264 aa).

Substrate is bound at residue 13 to 15 (NWK). The active-site Electrophile is the His98. Glu170 functions as the Proton acceptor in the catalytic mechanism. Substrate contacts are provided by residues Gly176, Ser216, and 237–238 (GG).

It belongs to the triosephosphate isomerase family. As to quaternary structure, homodimer.

The protein resides in the cytoplasm. The enzyme catalyses D-glyceraldehyde 3-phosphate = dihydroxyacetone phosphate. The protein operates within carbohydrate biosynthesis; gluconeogenesis. It participates in carbohydrate degradation; glycolysis; D-glyceraldehyde 3-phosphate from glycerone phosphate: step 1/1. Its function is as follows. Involved in the gluconeogenesis. Catalyzes stereospecifically the conversion of dihydroxyacetone phosphate (DHAP) to D-glyceraldehyde-3-phosphate (G3P). The sequence is that of Triosephosphate isomerase from Protochlamydia amoebophila (strain UWE25).